A 513-amino-acid chain; its full sequence is Autophagy-related protein 18 (513 aa).

The WD 1 repeat unit spans residues 2–40 (SDLPIINFINFNQNGTCISIGTSQGFKIFNCEPFGRFYQ). Residues 167-225 (NNINIKKSDAAEDPLRKDHFAYDPSDHSHPQSTTESTSNNHNRTYSSGNNNNTNSNPNK) form a disordered region. Positions 172-195 (KKSDAAEDPLRKDHFAYDPSDHSH) are enriched in basic and acidic residues. A compositionally biased stretch (low complexity) spans 205–225 (NNHNRTYSSGNNNNTNSNPNK). A WD 2 repeat occupies 248–288 (AHKGEIAALKLSADGTLLATASEKGTIIRVFNVENGSKVYQ). Residues 289–292 (FRRG) are necessary for proper localization to vacuole membrane. The L/FRRG motif motif lies at 289–293 (FRRGT). The stretch at 293–332 (TYSTKISSLSFSKDNQFLAVCSSSKTVHIFKLGEKIIDNT) is one WD 3 repeat. Positions 333–398 (KPNELNSDDD…TVGRMIRKSS (66 aa)) are disordered. A compositionally biased stretch (acidic residues) spans 338–369 (NSDDDMDDDLLPQFENGDDEEEVDEETLDEEA).

The protein belongs to the WD repeat PROPPIN family. As to quaternary structure, component of the PI(3,5)P2 regulatory complex. Interacts with ATG2 and ATG9. The ATG2-ATG18 complex is essential for autophagosome formation.

It is found in the preautophagosomal structure membrane. The protein resides in the vacuole membrane. It localises to the endosome membrane. Component of the PI(3,5)P2 regulatory complex that regulates both the synthesis and turnover of phosphatidylinositol 3,5-bisphosphate (PtdIns(3,5)P2). Plays an important role in osmotically-induced vacuole fragmentation. Required for cytoplasm to vacuole transport (Cvt) vesicle formation, pexophagy and starvation-induced autophagy. Involved in correct ATG9 trafficking to the pre-autophagosomal structure. With ATG2, protects ATG8 from ATG4-mediated cleavage. This chain is Autophagy-related protein 18, found in Kluyveromyces marxianus (strain DMKU3-1042 / BCC 29191 / NBRC 104275) (Yeast).